Reading from the N-terminus, the 156-residue chain is Small ribosomal subunit protein uS7 (156 aa).

This sequence belongs to the universal ribosomal protein uS7 family. Part of the 30S ribosomal subunit. Contacts proteins S9 and S11.

Functionally, one of the primary rRNA binding proteins, it binds directly to 16S rRNA where it nucleates assembly of the head domain of the 30S subunit. Is located at the subunit interface close to the decoding center, probably blocks exit of the E-site tRNA. The protein is Small ribosomal subunit protein uS7 of Acidithiobacillus ferrooxidans (strain ATCC 53993 / BNL-5-31) (Leptospirillum ferrooxidans (ATCC 53993)).